The following is a 518-amino-acid chain: uncharacterized protein (518 aa).

Residues Met1–Gly21 form the signal peptide. N-linked (GlcNAc...) asparagine glycosylation is found at Asn30, Asn142, Asn295, Asn342, Asn362, Asn410, and Asn503. Positions Cys389 to Gln517 constitute a CUB domain.

The protein localises to the secreted. This is an uncharacterized protein from Caenorhabditis elegans.